The sequence spans 779 residues: Glucan endo-1,3-beta-D-glucosidase 2 (779 aa).

The segment at 1 to 71 (MCYSRQAIPP…SNPLADSQVN (71 aa)) is disordered. Residues 57–71 (RTPSSSNPLADSQVN) are compositionally biased toward polar residues. The segment at 73–309 (DNIFQSPVLS…NGLICQLSAD (237 aa)) is beta-sandwich subdomain. The GH81 domain occupies 73–779 (DNIFQSPVLS…WSLAYSGAFS (707 aa)). Residues 309 to 400 (DSVPSIDMAA…LTNSFDMQVQ (92 aa)) are alpha/beta subdomain. The interval 375–779 (IASSLDSTVK…WSLAYSGAFS (405 aa)) is sufficient for catalytic activity. The segment at 415 to 779 (NKKADYSQEK…WSLAYSGAFS (365 aa)) is (alpha/beta)6 barrel subdomain. Asp-526 is a catalytic residue. Residues His-530, Asp-607, Glu-609, and Glu-613 each contribute to the (1,3-beta-D-glucosyl)n site. Catalysis depends on residues Glu-609 and Glu-613. The tract at residues 678–680 (KID) is may provide specificity for triple-helical beta-glucan. Tyr-691 is a binding site for (1,3-beta-D-glucosyl)n.

The protein belongs to the glycosyl hydrolase 81 family.

It localises to the cytoplasm. It catalyses the reaction Hydrolysis of (1-&gt;3)-beta-D-glucosidic linkages in (1-&gt;3)-beta-D-glucans.. With respect to regulation, inhibited by mercury ions. Its function is as follows. Cleaves internal linkages in 1,3-beta-glucan. This is Glucan endo-1,3-beta-D-glucosidase 2 from Saccharomyces cerevisiae (strain ATCC 204508 / S288c) (Baker's yeast).